The sequence spans 881 residues: Translation initiation factor IF-2 (881 aa).

Disordered stretches follow at residues 31 to 147 (KLAQ…TKVP) and 165 to 291 (SVVG…HYDE). Basic and acidic residues predominate over residues 42–55 (NSSEKPSAKVAEKV). Positions 68–77 (ATPESVSSET) are enriched in polar residues. Residues 114-128 (VEEEIASSTDSEPEV) show a composition bias toward acidic residues. Residues 191-203 (PKKEDKPAPKERS) are compositionally biased toward basic and acidic residues. A compositionally biased stretch (polar residues) spans 204–233 (GQAQAKPQQSSEASSENKPHSPNNNRSSQP). Residues 235–267 (YRRDTSKKPGSDFRDRAKKDDNPKAFTGRDRYG) are compositionally biased toward basic and acidic residues. Basic residues predominate over residues 278 to 287 (RKKRVQKTKK). The tr-type G domain occupies 387–556 (IRPPIVAFMG…ALQAEVLELK (170 aa)). Residues 396–403 (GHVDHGKT) form a G1 region. Residue 396 to 403 (GHVDHGKT) coordinates GTP. The segment at 421–425 (AITQH) is G2. Positions 442-445 (DTPG) are G3. GTP contacts are provided by residues 442–446 (DTPGH) and 496–499 (NKCD). Residues 496-499 (NKCD) form a G4 region. The tract at residues 532–534 (SAK) is G5.

Belongs to the TRAFAC class translation factor GTPase superfamily. Classic translation factor GTPase family. IF-2 subfamily.

The protein localises to the cytoplasm. One of the essential components for the initiation of protein synthesis. Protects formylmethionyl-tRNA from spontaneous hydrolysis and promotes its binding to the 30S ribosomal subunits. Also involved in the hydrolysis of GTP during the formation of the 70S ribosomal complex. In Chlamydia felis (strain Fe/C-56) (Chlamydophila felis), this protein is Translation initiation factor IF-2.